Here is a 419-residue protein sequence, read N- to C-terminus: Protein translocase subunit SecY (419 aa).

A run of 10 helical transmembrane segments spans residues 19–39, 64–84, 113–133, 143–163, 167–189, 202–222, 255–275, 299–319, 359–379, and 380–400; these read IMIL…ITEV, VISI…AVQF, ILTV…LRSF, FVVA…SEVI, GIGN…FLIN, SNLY…FSTL, FGQA…FLTT, IFYF…YTLI, FVGS…AAAL, and GVHP…SIIN.

This sequence belongs to the SecY/SEC61-alpha family. In terms of assembly, component of the plastid Sec protein translocase complex, which is composed of at least SecY and SecE.

The protein localises to the plastid. It is found in the chloroplast thylakoid membrane. In terms of biological role, the central subunit of the protein translocation channel SecYE. Consists of two halves formed by TMs 1-5 and 6-10. These two domains form a lateral gate at the front which open onto the bilayer between TMs 2 and 7, and are clamped together by SecE at the back. The channel is closed by both a pore ring composed of hydrophobic SecY resides and a short helix (helix 2A) on the extracellular side of the membrane which forms a plug. The protein is Protein translocase subunit SecY of Diacronema lutheri (Unicellular marine alga).